Here is a 314-residue protein sequence, read N- to C-terminus: Ribonuclease Z (314 aa).

7 residues coordinate Zn(2+): histidine 61, histidine 63, aspartate 65, histidine 66, histidine 139, aspartate 211, and histidine 269. Aspartate 65 functions as the Proton acceptor in the catalytic mechanism.

Belongs to the RNase Z family. As to quaternary structure, homodimer. The cofactor is Zn(2+).

The catalysed reaction is Endonucleolytic cleavage of RNA, removing extra 3' nucleotides from tRNA precursor, generating 3' termini of tRNAs. A 3'-hydroxy group is left at the tRNA terminus and a 5'-phosphoryl group is left at the trailer molecule.. Its function is as follows. Zinc phosphodiesterase, which displays some tRNA 3'-processing endonuclease activity. Probably involved in tRNA maturation, by removing a 3'-trailer from precursor tRNA. In Gemmatimonas aurantiaca (strain DSM 14586 / JCM 11422 / NBRC 100505 / T-27), this protein is Ribonuclease Z.